A 318-amino-acid polypeptide reads, in one-letter code: SPX domain-containing protein 4 (318 aa).

The SPX domain maps to 1 to 187 (MKFGKEFRTH…GGLLRLPFTQ (187 aa)). The segment covering 226 to 237 (SAVQAHSSSHQH) has biased composition (low complexity). 2 disordered regions span residues 226–247 (SAVQAHSSSHQHNSPRISAETS) and 284–318 (SSLLQNEDDETVTAENSPNSGNKDDSEKEDTGPSH). A compositionally biased stretch (basic and acidic residues) spans 305-318 (NKDDSEKEDTGPSH).

The protein is SPX domain-containing protein 4 (SPX4) of Arabidopsis thaliana (Mouse-ear cress).